The primary structure comprises 3020 residues: Protein furry homolog (3020 aa).

Phosphotyrosine is present on Tyr-213. 3 disordered regions span residues 1378–1404 (GSSPSSPEDEVKDREGEVTASHGLKGN), 1529–1554 (ASGTTSSSNTVVAGQDSFPDPEESKI), and 1746–1773 (SSPVPDSGLNSSSTSSSISLGGSSGNLP). Ser-1382 and Ser-1383 each carry phosphoserine. Over residues 1752 to 1772 (SGLNSSSTSSSISLGGSSGNL) the composition is skewed to low complexity. A phosphoserine mark is found at Ser-1936 and Ser-1940. Over residues 1937-1956 (RSSSPDLSSSSKLTASRKST) the composition is skewed to low complexity. Disordered regions lie at residues 1937–2042 (RSSS…PSHV) and 2355–2384 (LQNSSGRDGKPRAMAVTRSASSTSSGSNSN). Residues 1966–1976 (PGSGGGGGGSG) show a composition bias toward gly residues. A compositionally biased stretch (polar residues) spans 2016–2042 (ACTQQGLSSKTRSNSSLKESLTDPSHV). Positions 2369–2384 (AVTRSASSTSSGSNSN) are enriched in low complexity. Residues Ser-2427 and Ser-2428 each carry the phosphoserine modification. Positions 2439–2458 (TSLVSSEDGPREQENMDDTN) are disordered. Position 2495 is a phosphoserine (Ser-2495). The interval 2508-2535 (EERQLSRSTPSLNKMSHEDSDESSEEDL) is disordered. Thr-2516 carries the post-translational modification Phosphothreonine; by CDK1. Residues 2526-2535 (DSDESSEEDL) are compositionally biased toward acidic residues. At Ser-2815 the chain carries Phosphoserine.

This sequence belongs to the furry protein family. In terms of assembly, when phosphorylated by CDK1, interacts with PLK1; this interaction occurs in mitotic cells, but not in interphase cells, and leads to further FRY phosphorylation by PLK1. Phosphorylated by AURKA, CDK1 and PLK1.

Its subcellular location is the cytoplasm. The protein localises to the cytoskeleton. It localises to the microtubule organizing center. It is found in the centrosome. The protein resides in the spindle pole. In terms of biological role, plays a crucial role in the structural integrity of mitotic centrosomes and in the maintenance of spindle bipolarity by promoting PLK1 activity at the spindle poles in early mitosis. May function as a scaffold promoting the interaction between AURKA and PLK1, thereby enhancing AURKA-mediated PLK1 phosphorylation. This is Protein furry homolog (Fry) from Mus musculus (Mouse).